An 81-amino-acid chain; its full sequence is ATP synthase subunit c (81 aa).

The next 2 helical transmembrane spans lie at 7–27 (AASVLAAALAVGLAAIGPGIG) and 57–77 (LAFMEALTIYGLVVALVLLFA).

It belongs to the ATPase C chain family. F-type ATPases have 2 components, F(1) - the catalytic core - and F(0) - the membrane proton channel. F(1) has five subunits: alpha(3), beta(3), gamma(1), delta(1), epsilon(1). F(0) has four main subunits: a(1), b(1), b'(1) and c(10-14). The alpha and beta chains form an alternating ring which encloses part of the gamma chain. F(1) is attached to F(0) by a central stalk formed by the gamma and epsilon chains, while a peripheral stalk is formed by the delta, b and b' chains.

It is found in the cellular thylakoid membrane. In terms of biological role, f(1)F(0) ATP synthase produces ATP from ADP in the presence of a proton or sodium gradient. F-type ATPases consist of two structural domains, F(1) containing the extramembraneous catalytic core and F(0) containing the membrane proton channel, linked together by a central stalk and a peripheral stalk. During catalysis, ATP synthesis in the catalytic domain of F(1) is coupled via a rotary mechanism of the central stalk subunits to proton translocation. Its function is as follows. Key component of the F(0) channel; it plays a direct role in translocation across the membrane. A homomeric c-ring of between 10-14 subunits forms the central stalk rotor element with the F(1) delta and epsilon subunits. This chain is ATP synthase subunit c, found in Synechococcus elongatus (strain ATCC 33912 / PCC 7942 / FACHB-805) (Anacystis nidulans R2).